We begin with the raw amino-acid sequence, 470 residues long: Sulfate adenylyltransferase subunit 1 (470 aa).

The tr-type G domain maps to 22 to 236 (KELLRFITCG…YLETIKIDYA (215 aa)). The segment at 31–38 (GSVDDGKS) is G1. Residue 31–38 (GSVDDGKS) coordinates GTP. The segment at 89–93 (GITID) is G2. Positions 110–113 (DTPG) are G3. Residues 110–114 (DTPGH) and 165–168 (NKMD) each bind GTP. The tract at residues 165–168 (NKMD) is G4. Residues 202-204 (SAL) form a G5 region.

It belongs to the TRAFAC class translation factor GTPase superfamily. Classic translation factor GTPase family. CysN/NodQ subfamily. As to quaternary structure, heterodimer composed of CysD, the smaller subunit, and CysN.

It catalyses the reaction sulfate + ATP + H(+) = adenosine 5'-phosphosulfate + diphosphate. Its pathway is sulfur metabolism; hydrogen sulfide biosynthesis; sulfite from sulfate: step 1/3. Its function is as follows. With CysD forms the ATP sulfurylase (ATPS) that catalyzes the adenylation of sulfate producing adenosine 5'-phosphosulfate (APS) and diphosphate, the first enzymatic step in sulfur assimilation pathway. APS synthesis involves the formation of a high-energy phosphoric-sulfuric acid anhydride bond driven by GTP hydrolysis by CysN coupled to ATP hydrolysis by CysD. The protein is Sulfate adenylyltransferase subunit 1 of Francisella tularensis subsp. novicida (strain U112).